Here is a 148-residue protein sequence, read N- to C-terminus: Snaclec flavocetin-A subunit beta (148 aa).

Positions 1–23 (MGQFIFVSFGFLVVATSLSGTEA) are cleaved as a signal peptide. 3 cysteine pairs are disulfide-bonded: Cys-27-Cys-38, Cys-55-Cys-144, and Cys-121-Cys-136. The 112-residue stretch at 34–145 (YDEHCYQVFQ…CSSKRYVVCK (112 aa)) folds into the C-type lectin domain.

Belongs to the snaclec family. In terms of assembly, tetramer of heterodimers of alpha and beta subunits (alphabeta)(4); disulfide-linked. In terms of tissue distribution, expressed by the venom gland.

It is found in the secreted. In terms of biological role, strong platelet aggregation inhibitor. Binds specifically to platelet glycoprotein Ibalpha (GP1BA) with high affinity and inhibits vWF-dependent platelet aggregation. Has also been observed to induce small agglutinates in washed platelets by binding to GPIb. In Protobothrops flavoviridis (Habu), this protein is Snaclec flavocetin-A subunit beta.